The primary structure comprises 863 residues: Leucine-rich repeat and death domain-containing protein 1 (863 aa).

Disordered stretches follow at residues 1 to 37 and 51 to 100; these read MSEK…KETS and SSNQ…SQSL. A compositionally biased stretch (low complexity) spans 88–100; the sequence is SETSTRTETSQSL. LRR repeat units follow at residues 143 to 166, 167 to 189, 190 to 213, 214 to 236, 238 to 259, 260 to 282, 284 to 305, 306 to 328, 329 to 351, 353 to 374, 375 to 397, 398 to 420, 422 to 443, 445 to 466, 468 to 489, 490 to 513, 515 to 535, 536 to 558, 560 to 581, 582 to 604, 606 to 627, 630 to 653, 654 to 676, 678 to 699, 700 to 722, and 724 to 745; these read CKDN…ILKI, KYVK…DSGD, LLGL…IQLL, HNLR…ISQL, NIRQ…LECL, GNLE…LPSL, YLRV…LCFL, PKLI…IREL, KNLE…IFQL, KIKE…IENF, RELR…ICCC, AMLE…IHKL, NLRK…ISHL, NICS…IKNC, KIIK…LCAL, DSLY…SFSK, LLHL…FCSL, INLK…ISNM, SLHV…LCTL, ENLR…ICNL, RIQK…LCQL, LEQL…LSNM, TQLK…IGEL, NLVS…LLSL, NDLQ…IYNL, and SLKE…ICKG. In terms of domain architecture, Death spans 767-855; it reads EKIFKIVANN…EIMDKITALN (89 aa). Residues 856 to 863 form an LRR 27 repeat; it reads LFTRAIKF.

In Macaca fascicularis (Crab-eating macaque), this protein is Leucine-rich repeat and death domain-containing protein 1 (LRRD1).